Consider the following 250-residue polypeptide: 2,3-bisphosphoglycerate-dependent phosphoglycerate mutase (250 aa).

Substrate-binding positions include 10–17, 23–24, arginine 62, 89–92, lysine 100, 116–117, and 185–186; these read RHGESQWN, TG, ERHY, RR, and GN. Histidine 11 acts as the Tele-phosphohistidine intermediate in catalysis. Glutamate 89 acts as the Proton donor/acceptor in catalysis.

The protein belongs to the phosphoglycerate mutase family. BPG-dependent PGAM subfamily. In terms of assembly, homodimer.

It carries out the reaction (2R)-2-phosphoglycerate = (2R)-3-phosphoglycerate. It participates in carbohydrate degradation; glycolysis; pyruvate from D-glyceraldehyde 3-phosphate: step 3/5. Catalyzes the interconversion of 2-phosphoglycerate and 3-phosphoglycerate. In Cronobacter sakazakii (strain ATCC BAA-894) (Enterobacter sakazakii), this protein is 2,3-bisphosphoglycerate-dependent phosphoglycerate mutase.